Consider the following 364-residue polypeptide: Chorismate synthase (364 aa).

Positions 41-60 (MQHDLDRRRPGTSRYTTARR) are disordered. The NADP(+) site is built by Arg48 and Arg54. Residues 125–127 (RSS), 238–239 (NA), Gly278, 293–297 (KPTSS), and Arg319 contribute to the FMN site.

This sequence belongs to the chorismate synthase family. Homotetramer. The cofactor is FMNH2.

The catalysed reaction is 5-O-(1-carboxyvinyl)-3-phosphoshikimate = chorismate + phosphate. It functions in the pathway metabolic intermediate biosynthesis; chorismate biosynthesis; chorismate from D-erythrose 4-phosphate and phosphoenolpyruvate: step 7/7. Catalyzes the anti-1,4-elimination of the C-3 phosphate and the C-6 proR hydrogen from 5-enolpyruvylshikimate-3-phosphate (EPSP) to yield chorismate, which is the branch point compound that serves as the starting substrate for the three terminal pathways of aromatic amino acid biosynthesis. This reaction introduces a second double bond into the aromatic ring system. This Shewanella putrefaciens (strain CN-32 / ATCC BAA-453) protein is Chorismate synthase.